The primary structure comprises 71 residues: ATP synthase subunit c (71 aa).

A run of 2 helical transmembrane segments spans residues 5–25 (VLAAGIAVLSGIGAGVGIGIA) and 46–66 (FFILGAALCETTAIYGLVMAF).

This sequence belongs to the ATPase C chain family. F-type ATPases have 2 components, F(1) - the catalytic core - and F(0) - the membrane proton channel. F(1) has five subunits: alpha(3), beta(3), gamma(1), delta(1), epsilon(1). F(0) has three main subunits: a(1), b(2) and c(10-14). The alpha and beta chains form an alternating ring which encloses part of the gamma chain. F(1) is attached to F(0) by a central stalk formed by the gamma and epsilon chains, while a peripheral stalk is formed by the delta and b chains.

It localises to the cell membrane. In terms of biological role, f(1)F(0) ATP synthase produces ATP from ADP in the presence of a proton or sodium gradient. F-type ATPases consist of two structural domains, F(1) containing the extramembraneous catalytic core and F(0) containing the membrane proton channel, linked together by a central stalk and a peripheral stalk. During catalysis, ATP synthesis in the catalytic domain of F(1) is coupled via a rotary mechanism of the central stalk subunits to proton translocation. Key component of the F(0) channel; it plays a direct role in translocation across the membrane. A homomeric c-ring of between 10-14 subunits forms the central stalk rotor element with the F(1) delta and epsilon subunits. The sequence is that of ATP synthase subunit c from Clostridium beijerinckii (strain ATCC 51743 / NCIMB 8052) (Clostridium acetobutylicum).